We begin with the raw amino-acid sequence, 129 residues long: D-ribose pyranase (129 aa).

The Proton donor role is filled by His-20. Substrate-binding positions include Asp-28, His-96, and 118-120; that span reads YAN.

This sequence belongs to the RbsD / FucU family. RbsD subfamily. In terms of assembly, homodecamer.

It is found in the cytoplasm. The catalysed reaction is beta-D-ribopyranose = beta-D-ribofuranose. Its pathway is carbohydrate metabolism; D-ribose degradation; D-ribose 5-phosphate from beta-D-ribopyranose: step 1/2. In terms of biological role, catalyzes the interconversion of beta-pyran and beta-furan forms of D-ribose. The chain is D-ribose pyranase from Shouchella clausii (strain KSM-K16) (Alkalihalobacillus clausii).